A 186-amino-acid polypeptide reads, in one-letter code: Ribosome-recycling factor (186 aa).

This sequence belongs to the RRF family.

Its subcellular location is the cytoplasm. Its function is as follows. Responsible for the release of ribosomes from messenger RNA at the termination of protein biosynthesis. May increase the efficiency of translation by recycling ribosomes from one round of translation to another. The chain is Ribosome-recycling factor from Chlorobium luteolum (strain DSM 273 / BCRC 81028 / 2530) (Pelodictyon luteolum).